The chain runs to 157 residues: Selenoprotein F (157 aa).

Residues Met1 to Ala19 form the signal peptide. Sec84 is a non-standard amino acid (selenocysteine).

This sequence belongs to the selenoprotein M/F family. In terms of tissue distribution, expressed in the brain, liver and retina. Localized to the retinal ganglion cell layer, the inner nuclear layer and the outer nuclear layer at both parr and smolt stages.

The protein resides in the endoplasmic reticulum lumen. Its function is as follows. May be involved in redox reactions associated with the formation of disulfide bonds. May contribute to the quality control of protein folding in the endoplasmic reticulum. May be involved in retinal development. This Oncorhynchus mykiss (Rainbow trout) protein is Selenoprotein F.